A 283-amino-acid chain; its full sequence is Bis(5'-nucleosyl)-tetraphosphatase, symmetrical (283 aa).

It belongs to the Ap4A hydrolase family.

It carries out the reaction P(1),P(4)-bis(5'-adenosyl) tetraphosphate + H2O = 2 ADP + 2 H(+). Functionally, hydrolyzes diadenosine 5',5'''-P1,P4-tetraphosphate to yield ADP. The polypeptide is Bis(5'-nucleosyl)-tetraphosphatase, symmetrical (Pseudomonas fluorescens (strain SBW25)).